A 625-amino-acid polypeptide reads, in one-letter code: Glucose dehydrogenase [FAD, quinone] (625 aa).

Positions 1-42 (MATSPSSCDCLVGVPTGPTLASTCGGSAFMLFMGLLEVFIRS) are cleaved as a signal peptide. 66–95 (DFIVIGGGSAGSVVASRLSEVPQWKVLLIE) provides a ligand contact to FAD. The active-site Proton acceptor is histidine 544. Residue selenocysteine 613 is a non-standard amino acid, selenocysteine.

Belongs to the GMC oxidoreductase family. FAD serves as cofactor.

It is found in the secreted. It catalyses the reaction a quinone + D-glucose = D-glucono-1,5-lactone + a quinol. In Drosophila pseudoobscura pseudoobscura (Fruit fly), this protein is Glucose dehydrogenase [FAD, quinone] (Gld).